The chain runs to 471 residues: Trigger factor (471 aa).

A PPIase FKBP-type domain is found at G165–P244. Residues V407 to S471 are disordered. The span at D416 to P443 shows a compositional bias: acidic residues.

Belongs to the FKBP-type PPIase family. Tig subfamily.

Its subcellular location is the cytoplasm. The catalysed reaction is [protein]-peptidylproline (omega=180) = [protein]-peptidylproline (omega=0). In terms of biological role, involved in protein export. Acts as a chaperone by maintaining the newly synthesized protein in an open conformation. Functions as a peptidyl-prolyl cis-trans isomerase. The polypeptide is Trigger factor (Kineococcus radiotolerans (strain ATCC BAA-149 / DSM 14245 / SRS30216)).